Consider the following 389-residue polypeptide: ATP phosphoribosyltransferase regulatory subunit (389 aa).

This sequence belongs to the class-II aminoacyl-tRNA synthetase family. HisZ subfamily. As to quaternary structure, heteromultimer composed of HisG and HisZ subunits.

It is found in the cytoplasm. Its pathway is amino-acid biosynthesis; L-histidine biosynthesis; L-histidine from 5-phospho-alpha-D-ribose 1-diphosphate: step 1/9. Its function is as follows. Required for the first step of histidine biosynthesis. May allow the feedback regulation of ATP phosphoribosyltransferase activity by histidine. This chain is ATP phosphoribosyltransferase regulatory subunit, found in Moorella thermoacetica (strain ATCC 39073 / JCM 9320).